The primary structure comprises 480 residues: ATP-dependent rRNA helicase RRP3 (480 aa).

Basic and acidic residues-rich tracts occupy residues 1 to 17 (MAKA…KEES) and 33 to 46 (DTTK…EPKK). The segment at 1–63 (MAKATEKRVK…VEVDESEEQT (63 aa)) is disordered. Positions 64 to 92 (KTFKDLGVIDSICETCEELKFTKPTPIQA) match the Q motif motif. The Helicase ATP-binding domain occupies 95-266 (IPYALEGRDI…RASLVDPVRV (172 aa)). 108–115 (AQTGSGKT) contributes to the ATP binding site. The DEAD box signature appears at 214–217 (DEAD). Residues 277–437 (NLLQYMVFCP…SYPLESEAVM (161 aa)) enclose the Helicase C-terminal domain. Residues 450–480 (AIQEMKGEDGTKKRSKFDKKRRRDEMDIGEQ) are disordered. Basic residues predominate over residues 462–471 (KRSKFDKKRR).

It belongs to the DEAD box helicase family. DDX47/RRP3 subfamily. In terms of assembly, interacts with the SSU processome.

It localises to the nucleus. The catalysed reaction is ATP + H2O = ADP + phosphate + H(+). In terms of biological role, ATP-dependent rRNA helicase required for pre-ribosomal RNA processing. Involved in the maturation of the 35S-pre-rRNA and to its cleavage to mature 18S rRNA. The polypeptide is ATP-dependent rRNA helicase RRP3 (Yarrowia lipolytica (strain CLIB 122 / E 150) (Yeast)).